We begin with the raw amino-acid sequence, 216 residues long: Refilin-A (216 aa).

The disordered stretch occupies residues 1–83; the sequence is MVGHLHLQGM…LPNPPASEMR (83 aa). The segment covering 12–22 has biased composition (basic and acidic residues); that stretch reads DSLKEQGREGL. The span at 29–39 shows a compositional bias: pro residues; that stretch reads GLPPSPSPSPP. Positions 57 to 71 are enriched in low complexity; it reads ASSEPPGPSEARAPP. Arg-163 is modified (asymmetric dimethylarginine).

The protein belongs to the Refilin family. Interacts with FLNA and FLNB.

Its subcellular location is the cytoplasm. The protein resides in the cytoskeleton. Involved in the regulation of the perinuclear actin network and nuclear shape through interaction with filamins. Plays an essential role in actin cytoskeleton formation in developing cartilaginous cells. The protein is Refilin-A of Homo sapiens (Human).